Consider the following 208-residue polypeptide: Large ribosomal subunit protein bL25 (208 aa).

Residues Leu-178 to Glu-208 form a disordered region. Acidic residues predominate over residues Pro-186–Lys-195. Residues Glu-196 to Glu-208 are compositionally biased toward basic and acidic residues.

The protein belongs to the bacterial ribosomal protein bL25 family. CTC subfamily. Part of the 50S ribosomal subunit; part of the 5S rRNA/L5/L18/L25 subcomplex. Contacts the 5S rRNA. Binds to the 5S rRNA independently of L5 and L18.

Its function is as follows. This is one of the proteins that binds to the 5S RNA in the ribosome where it forms part of the central protuberance. This Bacillus pumilus (strain SAFR-032) protein is Large ribosomal subunit protein bL25.